Here is a 257-residue protein sequence, read N- to C-terminus: S-methyl-5'-thioadenosine phosphorylase (257 aa).

Residues Ser-10, 50–51 (RH), and 83–84 (TA) each bind phosphate. Met-180 lines the substrate pocket. Thr-181 is a phosphate binding site. 204 to 206 (DYD) contacts substrate.

It belongs to the PNP/MTAP phosphorylase family. MTAP subfamily. Homohexamer. Dimer of a homotrimer.

It catalyses the reaction S-methyl-5'-thioadenosine + phosphate = 5-(methylsulfanyl)-alpha-D-ribose 1-phosphate + adenine. The enzyme catalyses adenosine + phosphate = alpha-D-ribose 1-phosphate + adenine. The protein operates within amino-acid biosynthesis; L-methionine biosynthesis via salvage pathway; S-methyl-5-thio-alpha-D-ribose 1-phosphate from S-methyl-5'-thioadenosine (phosphorylase route): step 1/1. Its function is as follows. Catalyzes the reversible phosphorylation of S-methyl-5'-thioadenosine (MTA) to adenine and 5-methylthioribose-1-phosphate. Involved in the breakdown of MTA, a major by-product of polyamine biosynthesis. Responsible for the first step in the methionine salvage pathway after MTA has been generated from S-adenosylmethionine. Has broad substrate specificity with 6-aminopurine nucleosides as preferred substrates. Can also use adenosine as substrate to form ribose 1-phosphate. This is S-methyl-5'-thioadenosine phosphorylase from Thermococcus kodakarensis (strain ATCC BAA-918 / JCM 12380 / KOD1) (Pyrococcus kodakaraensis (strain KOD1)).